We begin with the raw amino-acid sequence, 673 residues long: Thimet-like oligopeptidase (673 aa).

Histidine 465 serves as a coordination point for Zn(2+). Glutamate 466 is an active-site residue. Zn(2+) contacts are provided by histidine 469 and histidine 472.

It belongs to the peptidase M3 family. Requires Zn(2+) as cofactor.

In Dictyostelium discoideum (Social amoeba), this protein is Thimet-like oligopeptidase.